The sequence spans 323 residues: Acetyl esterase (323 aa).

Positions 91–93 match the Involved in the stabilization of the negatively charged intermediate by the formation of the oxyanion hole motif; the sequence is HGG. Active-site residues include S165, D262, and H292.

It belongs to the 'GDXG' lipolytic enzyme family. As to quaternary structure, homodimer. Interacts with MalT and MelA.

The protein resides in the cytoplasm. In terms of biological role, displays esterase activity towards short chain fatty esters (acyl chain length of up to 8 carbons). Able to hydrolyze triacetylglycerol (triacetin) and tributyrylglycerol (tributyrin), but not trioleylglycerol (triolein) or cholesterol oleate. Negatively regulates MalT activity by antagonizing maltotriose binding. Inhibits MelA galactosidase activity. This Salmonella choleraesuis (strain SC-B67) protein is Acetyl esterase.